The sequence spans 401 residues: L-rhamnonate dehydratase (401 aa).

Residues histidine 29 and arginine 55 each coordinate substrate. Residues aspartate 222, glutamate 248, and glutamate 276 each contribute to the Mg(2+) site. Histidine 325 (proton acceptor) is an active-site residue. Glutamate 345 is a binding site for substrate.

The protein belongs to the mandelate racemase/muconate lactonizing enzyme family. RhamD subfamily. As to quaternary structure, homooctamer; tetramer of dimers. It depends on Mg(2+) as a cofactor.

The enzyme catalyses L-rhamnonate = 2-dehydro-3-deoxy-L-rhamnonate + H2O. Catalyzes the dehydration of L-rhamnonate to 2-keto-3-deoxy-L-rhamnonate (KDR). In Salmonella heidelberg (strain SL476), this protein is L-rhamnonate dehydratase.